Reading from the N-terminus, the 106-residue chain is Large ribosomal subunit protein eL42 (106 aa).

It belongs to the eukaryotic ribosomal protein eL42 family.

This is Large ribosomal subunit protein eL42 (RPL44) from Schwanniomyces occidentalis (Yeast).